Reading from the N-terminus, the 289-residue chain is Putative 2-aminoethylphosphonate transport system permease protein PhnU (289 aa).

The next 6 membrane-spanning stretches (helical) occupy residues 19–39, 76–96, 111–131, 150–170, 202–222, and 254–274; these read WLLL…SLIV, FFAT…LVFI, FIAL…GSAG, FLYS…PLVM, VIFP…LLLT, and YTVA…LFSL. One can recognise an ABC transmembrane type-1 domain in the interval 68 to 275; that stretch reads LLNTLQIAFF…VLSLGLFSLY (208 aa).

It belongs to the binding-protein-dependent transport system permease family.

It is found in the cell inner membrane. In terms of biological role, probably part of the PhnSTUV complex (TC 3.A.1.11.5) involved in 2-aminoethylphosphonate import. Probably responsible for the translocation of the substrate across the membrane. This Salmonella paratyphi A (strain ATCC 9150 / SARB42) protein is Putative 2-aminoethylphosphonate transport system permease protein PhnU (phnU).